A 700-amino-acid chain; its full sequence is Elongation factor G (700 aa).

The region spanning 8-290 (SLYRNIGISA…AVIDYLPAPT (283 aa)) is the tr-type G domain. Residues 17–24 (AHIDAGKT), 88–92 (DTPGH), and 142–145 (NKMD) contribute to the GTP site.

The protein belongs to the TRAFAC class translation factor GTPase superfamily. Classic translation factor GTPase family. EF-G/EF-2 subfamily.

The protein resides in the cytoplasm. Its function is as follows. Catalyzes the GTP-dependent ribosomal translocation step during translation elongation. During this step, the ribosome changes from the pre-translocational (PRE) to the post-translocational (POST) state as the newly formed A-site-bound peptidyl-tRNA and P-site-bound deacylated tRNA move to the P and E sites, respectively. Catalyzes the coordinated movement of the two tRNA molecules, the mRNA and conformational changes in the ribosome. In Histophilus somni (strain 129Pt) (Haemophilus somnus), this protein is Elongation factor G.